The sequence spans 998 residues: UPF0182 protein AAur_2732 (998 aa).

Transmembrane regions (helical) follow at residues 18-38, 64-84, 115-135, 168-188, 211-231, 260-280, and 287-307; these read GALTPTLIVVAVAVVGFIFFA, IITFLIGFAMMFAAVFFAIRI, VVMIGLPILFGLFAGSAAASQ, FLGFITGFLISIAVVAGIAGI, QIHIAVTGALFLILLGVNFWL, AILAVAAGLVAILFIIAAIIG, and IGTAMLVITAILAGGVYPWVI. Disordered regions lie at residues 490 to 518, 888 to 923, and 971 to 998; these read GAPDGAPNREQDRPAGREGGGETQYTFSG, LFGGDSGATAGDSDNNGQTPTSPPGTTPPPAGPTDA, and QARLDATPAPTATPGATPSATPSPSPSS. Positions 496-509 are enriched in basic and acidic residues; the sequence is PNREQDRPAGREGG. Residues 908-919 are compositionally biased toward pro residues; that stretch reads TSPPGTTPPPAG. A compositionally biased stretch (low complexity) spans 976–990; the sequence is ATPAPTATPGATPSA.

It belongs to the UPF0182 family.

The protein localises to the cell membrane. The polypeptide is UPF0182 protein AAur_2732 (Paenarthrobacter aurescens (strain TC1)).